Consider the following 159-residue polypeptide: U1 small nuclear ribonucleoprotein C (159 aa).

The Matrin-type zinc-finger motif lies at 4 to 36; it reads FYCDYCDTYLTHDSPSVRKTHCSGRKHKENVKD. Disordered regions lie at residues 63-95 and 139-159; these read PPTP…MPAP and MRPP…RPDR. Residues 77–95 are compositionally biased toward pro residues; that stretch reads IPPPPSMGGPPRPGMMPAP.

It belongs to the U1 small nuclear ribonucleoprotein C family. As to quaternary structure, component of the U1 snRNP. The U1 snRNP is composed of the U1 snRNA and the 7 core Sm proteins snrpb, snrpd1, snrpd2, snrpd3, snrpe, snrpf and snrpg that assemble in a heptameric protein ring on the Sm site of the small nuclear RNA to form the core snRNP, and at least 3 U1 snRNP-specific proteins snrnp70/U1-70K, snrpa/U1-A and snrpc/U1-C. snrpc/U1-C interacts with U1 snRNA and the 5' splice-site region of the pre-mRNA.

The protein resides in the nucleus. Its function is as follows. Component of the spliceosomal U1 snRNP, which is essential for recognition of the pre-mRNA 5' splice-site and the subsequent assembly of the spliceosome. snrpc/U1-C is directly involved in initial 5' splice-site recognition for both constitutive and regulated alternative splicing. The interaction with the 5' splice-site seems to precede base-pairing between the pre-mRNA and the U1 snRNA. Stimulates commitment or early (E) complex formation by stabilizing the base pairing of the 5' end of the U1 snRNA and the 5' splice-site region. This chain is U1 small nuclear ribonucleoprotein C, found in Xenopus tropicalis (Western clawed frog).